We begin with the raw amino-acid sequence, 355 residues long: Ubiquinone biosynthesis protein COQ4 homolog, mitochondrial (355 aa).

Zn(2+)-binding residues include His134, Asp135, His138, and Glu150.

This sequence belongs to the COQ4 family. Component of a multi-subunit COQ enzyme complex. Zn(2+) is required as a cofactor.

The protein localises to the mitochondrion inner membrane. It catalyses the reaction a 4-hydroxy-3-methoxy-5-(all-trans-polyprenyl)benzoate + H(+) = a 2-methoxy-6-(all-trans-polyprenyl)phenol + CO2. It participates in cofactor biosynthesis; ubiquinone biosynthesis. Its function is as follows. Lyase that catalyzes the C1-decarboxylation of 4-hydroxy-3-methoxy-5-(all-trans-polyprenyl)benzoic acid into 2-methoxy-6-(all-trans-polyprenyl)phenol during ubiquinone biosynthesis. The sequence is that of Ubiquinone biosynthesis protein COQ4 homolog, mitochondrial from Plasmodium chabaudi chabaudi.